The primary structure comprises 437 residues: GTPase Der (437 aa).

EngA-type G domains follow at residues 3-167 (NLVA…NKET) and 176-352 (PRFA…ENRT). Residues 9 to 16 (GRPNVGKS), 56 to 60 (DTGGW), 119 to 122 (NKTD), 182 to 189 (GRPNAGKS), 229 to 233 (DTAGI), and 294 to 297 (NKWD) each bind GTP. The 85-residue stretch at 353-437 (TKIPTARLNE…TPINIYIRQK (85 aa)) folds into the KH-like domain.

Belongs to the TRAFAC class TrmE-Era-EngA-EngB-Septin-like GTPase superfamily. EngA (Der) GTPase family. In terms of assembly, associates with the 50S ribosomal subunit.

In terms of biological role, GTPase that plays an essential role in the late steps of ribosome biogenesis. The polypeptide is GTPase Der (Bacteroides thetaiotaomicron (strain ATCC 29148 / DSM 2079 / JCM 5827 / CCUG 10774 / NCTC 10582 / VPI-5482 / E50)).